The primary structure comprises 84 residues: Cell division topological specificity factor (84 aa).

The protein belongs to the MinE family.

Its function is as follows. Prevents the cell division inhibition by proteins MinC and MinD at internal division sites while permitting inhibition at polar sites. This ensures cell division at the proper site by restricting the formation of a division septum at the midpoint of the long axis of the cell. The protein is Cell division topological specificity factor of Cupriavidus metallidurans (strain ATCC 43123 / DSM 2839 / NBRC 102507 / CH34) (Ralstonia metallidurans).